Reading from the N-terminus, the 212-residue chain is uncharacterized protein (212 aa).

The segment covering Asn-87–Asn-105 has biased composition (low complexity). A disordered region spans residues Asn-87–Ala-107.

This is an uncharacterized protein from Saccharomyces cerevisiae (strain ATCC 204508 / S288c) (Baker's yeast).